Here is a 473-residue protein sequence, read N- to C-terminus: Ras-GEF domain-containing family member 1B (473 aa).

Positions 34–161 (HDNNLLSGSL…NVQQMMQCLI (128 aa)) constitute an N-terminal Ras-GEF domain. Residues 205–453 (DPYTLAQQLT…YLASYESEGP (249 aa)) form the Ras-GEF domain.

As to quaternary structure, interacts with CCDC124 during cytokinesis. Interacts with Ras family proteins. As to expression, constitutively expressed in brain, intestine and testis. Low constitutive expression, if any, in heart, lung, lymph nodes and thymus. Up-regulated in heart, kidney, liver, lymph nodes, spleen and thymus at day 20 after infection with Trypanosoma cruzi. Not detected in muscle.

Its subcellular location is the early endosome. The protein resides in the late endosome. It is found in the midbody. Guanine nucleotide exchange factor (GEF) with specificity for RAP2A, it doesn't seems to activate other Ras family proteins (in vitro). The polypeptide is Ras-GEF domain-containing family member 1B (Rasgef1b) (Mus musculus (Mouse)).